A 223-amino-acid chain; its full sequence is Killer cell lectin-like receptor subfamily B member 1B allele B (223 aa).

At 1 to 43 (MDSTTLVYADLNLARIQEPKHDSPPSLSPDTCRCPRWHRLALK) the chain is on the cytoplasmic side. Positions 6–11 (LVYADL) match the ITIM motif motif. An LCK-binding motif motif is present at residues 32-35 (CRCP). Residues 44-64 (FGCAGLILLVLVVIGLCVLVL) form a helical; Signal-anchor for type II membrane protein membrane-spanning segment. Residues 65 to 223 (SVQKSSVQKI…LNHETPCNDS (159 aa)) are Extracellular-facing. A C-type lectin domain is found at 101–211 (HRDKCFHVSQ…CSSDNRWICQ (111 aa)). 2 disulfides stabilise this stretch: Cys-122–Cys-210 and Cys-189–Cys-202.

In terms of assembly, homodimer; disulfide-linked. Interacts with tyrosine kinase LCK. Binds PTPN6/SHP-1 in a phosphorylation-dependent manner. Expressed in NK cells and a subset of T-cells.

It is found in the membrane. Functionally, receptor for CLEC2D/OCIL. Ligand-binding contributes to inhibition of cytotoxic natural killer (NK) cells. May mediate MHC class I-independent 'missing-self' recognition of allografts, tumor cells and virus-infected cells. In Mus musculus (Mouse), this protein is Killer cell lectin-like receptor subfamily B member 1B allele B (Klrb1b).